A 566-amino-acid polypeptide reads, in one-letter code: Proline--tRNA ligase (566 aa).

It belongs to the class-II aminoacyl-tRNA synthetase family. ProS type 1 subfamily. Homodimer.

It is found in the cytoplasm. It catalyses the reaction tRNA(Pro) + L-proline + ATP = L-prolyl-tRNA(Pro) + AMP + diphosphate. Its function is as follows. Catalyzes the attachment of proline to tRNA(Pro) in a two-step reaction: proline is first activated by ATP to form Pro-AMP and then transferred to the acceptor end of tRNA(Pro). As ProRS can inadvertently accommodate and process non-cognate amino acids such as alanine and cysteine, to avoid such errors it has two additional distinct editing activities against alanine. One activity is designated as 'pretransfer' editing and involves the tRNA(Pro)-independent hydrolysis of activated Ala-AMP. The other activity is designated 'posttransfer' editing and involves deacylation of mischarged Ala-tRNA(Pro). The misacylated Cys-tRNA(Pro) is not edited by ProRS. The sequence is that of Proline--tRNA ligase from Bacillus cereus (strain AH187).